A 122-amino-acid chain; its full sequence is Large ribosomal subunit protein uL14 (122 aa).

This sequence belongs to the universal ribosomal protein uL14 family. Part of the 50S ribosomal subunit. Forms a cluster with proteins L3 and L19. In the 70S ribosome, L14 and L19 interact and together make contacts with the 16S rRNA in bridges B5 and B8.

In terms of biological role, binds to 23S rRNA. Forms part of two intersubunit bridges in the 70S ribosome. The polypeptide is Large ribosomal subunit protein uL14 (Aliarcobacter butzleri (strain RM4018) (Arcobacter butzleri)).